We begin with the raw amino-acid sequence, 310 residues long: Ribosomal RNA small subunit methyltransferase H (310 aa).

S-adenosyl-L-methionine-binding positions include 32–34 (GGH), D52, F79, D100, and Q107.

The protein belongs to the methyltransferase superfamily. RsmH family.

It localises to the cytoplasm. The catalysed reaction is cytidine(1402) in 16S rRNA + S-adenosyl-L-methionine = N(4)-methylcytidine(1402) in 16S rRNA + S-adenosyl-L-homocysteine + H(+). Functionally, specifically methylates the N4 position of cytidine in position 1402 (C1402) of 16S rRNA. The polypeptide is Ribosomal RNA small subunit methyltransferase H (Bacillus anthracis (strain A0248)).